The following is a 99-amino-acid chain: U11-barytoxin-Tl1a (99 aa).

The signal sequence occupies residues 1–21; the sequence is MKTLVLVAVLGLASLYLLSYA. Positions 22 to 50 are excised as a propeptide; the sequence is SEVQQISRDEEDFRALMASFGGIFDTEER. Cystine bridges form between Cys57/Cys71, Cys64/Cys76, and Cys70/Cys90.

The protein belongs to the neurotoxin 10 (Hwtx-1) family. 25 (ICK4) subfamily. In terms of tissue distribution, expressed by the venom gland.

The protein localises to the secreted. Functionally, ion channel inhibitor. In Trittame loki (Brush-footed trapdoor spider), this protein is U11-barytoxin-Tl1a.